We begin with the raw amino-acid sequence, 508 residues long: Methionine--tRNA ligase (508 aa).

The 'HIGH' region signature appears at 12 to 22 (YYVNDIPHIGH). A 'KMSKS' region motif is present at residues 295–299 (KISKS). Position 298 (Lys-298) interacts with ATP.

The protein belongs to the class-I aminoacyl-tRNA synthetase family. MetG type 2B subfamily. Monomer.

The protein localises to the cytoplasm. It carries out the reaction tRNA(Met) + L-methionine + ATP = L-methionyl-tRNA(Met) + AMP + diphosphate. Functionally, is required not only for elongation of protein synthesis but also for the initiation of all mRNA translation through initiator tRNA(fMet) aminoacylation. The polypeptide is Methionine--tRNA ligase (Rickettsia conorii (strain ATCC VR-613 / Malish 7)).